Reading from the N-terminus, the 398-residue chain is Probable sugar efflux transporter (398 aa).

The next 12 membrane-spanning stretches (helical) occupy residues 15 to 35 (VVTL…PVGL), 50 to 70 (VGIM…PFML), 81 to 101 (LIGL…AWNF), 103 to 123 (VLVI…SITA), 136 to 156 (AQAL…GLPI), 169 to 189 (TFFA…KLLP), 209 to 229 (PALM…YTAY), 246 to 266 (FATV…VLFG), 275 to 295 (LLVS…MPAA), 301 to 321 (LAIL…GMQV), 333 to 353 (VAMS…ALVG), and 364 to 384 (AIGY…ILIF).

It belongs to the major facilitator superfamily. SotB (TC 2.A.1.2) family.

It is found in the cell inner membrane. In terms of biological role, involved in the efflux of sugars. The physiological role may be the reduction of the intracellular concentration of toxic sugars or sugar metabolites. The polypeptide is Probable sugar efflux transporter (Enterobacter sp. (strain 638)).